The chain runs to 533 residues: Metallothionein expression activator (533 aa).

2 consecutive C2H2-type zinc fingers follow at residues 443–472 (YVCLYNGCNKRIARKYNVESHIQTHLSDRP) and 473–500 (YRCDLCKAGFVRHHDLKRHLRIHENGRP). A C2H2-type 3; atypical zinc finger spans residues 501–524 (YVCECLKRFNRLDALNRHKQRNIC).

Its subcellular location is the nucleus. In terms of biological role, regulates the transcription of genes required for cell separation. This chain is Metallothionein expression activator (ace2), found in Schizosaccharomyces pombe (strain 972 / ATCC 24843) (Fission yeast).